The chain runs to 59 residues: Insulin (59 aa).

3 disulfide bridges follow: cysteine 7-cysteine 45, cysteine 19-cysteine 58, and cysteine 44-cysteine 49.

It belongs to the insulin family. Heterodimer of a B chain and an A chain linked by two disulfide bonds.

It localises to the secreted. Its function is as follows. Insulin decreases blood glucose concentration. It increases cell permeability to monosaccharides, amino acids and fatty acids. It accelerates glycolysis, the pentose phosphate cycle, and glycogen synthesis in liver. This is Insulin (ins) from Chimaera monstrosa (Rabbit fish).